Consider the following 250-residue polypeptide: NAD(P)H-hydrate epimerase (250 aa).

A YjeF N-terminal domain is found at 14 to 238 (AAALDVELMS…SIAEKYGIQK (225 aa)). 74-78 (NNGGD) is a binding site for (6S)-NADPHX. 2 residues coordinate K(+): asparagine 75 and aspartate 143. (6S)-NADPHX is bound by residues 147-154 (GFSFHGTA), tyrosine 159, and aspartate 180. Residue serine 183 coordinates K(+).

It belongs to the NnrE/AIBP family. Requires K(+) as cofactor.

The enzyme catalyses (6R)-NADHX = (6S)-NADHX. The catalysed reaction is (6R)-NADPHX = (6S)-NADPHX. In terms of biological role, catalyzes the epimerization of the S- and R-forms of NAD(P)HX, a damaged form of NAD(P)H that is a result of enzymatic or heat-dependent hydration. This is a prerequisite for the S-specific NAD(P)H-hydrate dehydratase to allow the repair of both epimers of NAD(P)HX. The chain is NAD(P)H-hydrate epimerase from Thalassiosira pseudonana (Marine diatom).